The chain runs to 386 residues: Ovalbumin (386 aa).

The residue at position 2 (G2) is an N-acetylglycine. The residue at position 69 (S69) is a Phosphoserine. C74 and C121 are oxidised to a cystine. The N-linked (GlcNAc...) asparagine glycan is linked to N293. The residue at position 345 (S345) is a Phosphoserine.

It belongs to the serpin family. Ov-serpin subfamily. The N-terminus is blocked.

The protein localises to the secreted. Functionally, storage protein of egg white. Lacks protease inhibitory activity. This Dromaius novaehollandiae (Emu) protein is Ovalbumin (SERPINB14).